The sequence spans 333 residues: Probable G-protein coupled receptor 174 (333 aa).

Topologically, residues 1-27 (MPANYTCTRPDGDNTDFRYFIYAVTYT) are extracellular. Asn4 is a glycosylation site (N-linked (GlcNAc...) asparagine). The chain crosses the membrane as a helical span at residues 28–48 (VILVPGLIGNILALWVFYGYM). The Cytoplasmic segment spans residues 49–53 (KETKR). The helical transmembrane segment at 54 to 74 (AVIFMINLAIADLLQVLSLPL) threads the bilayer. Residues 75–91 (RIFYYLNHDWPFGPGLC) are Extracellular-facing. Residues Cys91 and Cys168 are joined by a disulfide bond. A helical transmembrane segment spans residues 92–112 (MFCFYLKYVNMYASIYFLVCI). The Cytoplasmic segment spans residues 113 to 134 (SVRRFWFLMYPFRFHDCKQKYD). Residues 135–155 (LYISIAGWLIICLACVLFPLL) form a helical membrane-spanning segment. Topologically, residues 156-182 (RTSDDTSGNRTKCFVDLPTRNVNLAQS) are extracellular. N-linked (GlcNAc...) asparagine glycosylation is present at Asn164. The chain crosses the membrane as a helical span at residues 183 to 203 (VVMMTIGELIGFVTPLLIVLY). Residues 204–231 (CTWKTVLSLQDKYPMAQDLGEKQKALKM) lie on the Cytoplasmic side of the membrane. The helical transmembrane segment at 232-252 (ILTCAGVFLICFAPYHFSFPL) threads the bilayer. Topologically, residues 253 to 269 (DFLVKSNEIKSCLARRV) are extracellular. The chain crosses the membrane as a helical span at residues 270-290 (ILIFHSVALCLASLNSCLDPV). Residues 291–333 (IYYFSTNEFRRRLSRQDLHDSIQLHAKSFVSNHTASTMTPELC) are Cytoplasmic-facing.

This sequence belongs to the G-protein coupled receptor 1 family. Interacts with GNA13. Interacts with CCL21.

It is found in the cell membrane. Functionally, G-protein-coupled receptor of lysophosphatidylserine (LysoPS) that plays different roles in immune response. Plays a negative role in regulatory T-cell accumulation and homeostasis. Under inflammatory conditions where LysoPS production increases, contributes to the down-regulation of regulatory T-cell activity to favor effector response. Mediates the suppression of IL-2 production in activated T-lymphocytes leading to inhibition of growth, proliferation and differentiation of T-cells. Mechanistically, acts via G(s)-containing heterotrimeric G proteins to trigger elevated cyclic AMP levels and protein kinase A/PKA activity, which may in turn act to antagonize proximal TCR signaling. Plays an important role in the initial period of sepsis through the regulation of macrophage polarization and pro- and anti-inflammatory cytokine secretions. Upon testosterone treatment, acts as a receptor for CCL21 and subsequently triggers through G(q)-alpha and G(12)/G(13) proteins a calcium flux leading to chemotactic effects on activated B-cells. Signals via GNA13 and PKA to promote CD86 up-regulation by follicular B-cells. The sequence is that of Probable G-protein coupled receptor 174 (GPR174) from Homo sapiens (Human).